The sequence spans 199 residues: GTP cyclohydrolase-2 (199 aa).

49 to 53 (RVHSE) contributes to the GTP binding site. The Zn(2+) site is built by Cys-54, Cys-65, and Cys-67. GTP contacts are provided by residues Gln-70, 92–94 (EGR), and Thr-114. Residue Asp-126 is the Proton acceptor of the active site. Residue Arg-128 is the Nucleophile of the active site. 2 residues coordinate GTP: Thr-149 and Lys-154.

It belongs to the GTP cyclohydrolase II family. The cofactor is Zn(2+).

It catalyses the reaction GTP + 4 H2O = 2,5-diamino-6-hydroxy-4-(5-phosphoribosylamino)-pyrimidine + formate + 2 phosphate + 3 H(+). The protein operates within cofactor biosynthesis; riboflavin biosynthesis; 5-amino-6-(D-ribitylamino)uracil from GTP: step 1/4. Its function is as follows. Catalyzes the conversion of GTP to 2,5-diamino-6-ribosylamino-4(3H)-pyrimidinone 5'-phosphate (DARP), formate and pyrophosphate. The protein is GTP cyclohydrolase-2 of Baumannia cicadellinicola subsp. Homalodisca coagulata.